The sequence spans 28 residues: Potassium channel toxin alpha-KTx 13.2 (28 aa).

Cystine bridges form between cysteine 2/cysteine 19, cysteine 6/cysteine 24, and cysteine 10/cysteine 26. Positions 17-24 (IKCINGSC) are interaction with Ca(2+)-activated K(+) channels.

This sequence belongs to the short scorpion toxin superfamily. Potassium channel inhibitor family. Alpha-KTx 13 subfamily. Expressed by the venom gland.

Its subcellular location is the secreted. Potent and selective inhibitor of Kv1.2/KCNA2 potassium channels. The protein is Potassium channel toxin alpha-KTx 13.2 of Orthochirus scrobiculosus (Central Asian scorpion).